Consider the following 30-residue polypeptide: Small toxic protein BsrE (30 aa).

A helical transmembrane segment spans residues 4-24 (FQALMLMLAIGSFIIALLTYI).

It localises to the cell membrane. In terms of biological role, toxic component of a type I toxin-antitoxin (TA) system; overexpression in the absence of cognate antisense antitoxin SR5 RNA leads to cell lysis. Base pairing occurs between the 3' UTRs of bsrE mRNA and SR5 RNA which leads to bsrE mRNA degradation initiated by RNase III (rnc) and RNase J1 (rnjA). Genetic evidence suggests an unidentified RNA-binding protein may exist that promotes TA RNA interaction. In Bacillus subtilis (strain 168), this protein is Small toxic protein BsrE.